We begin with the raw amino-acid sequence, 462 residues long: Ribosomal oxygenase 2 (462 aa).

A disordered region spans residues 1–24 (MPKKARPAGDGKEQGPAPKQVKVE). A JmjC domain is found at 139-271 (QPQRFKDELW…SSWGDFLLDT (133 aa)). Fe cation is bound by residues H179, D181, and H240. Phosphoserine is present on S308.

Belongs to the ROX family. MINA53 subfamily. Fe(2+) is required as a cofactor.

It localises to the nucleus. It is found in the nucleolus. It catalyses the reaction L-histidyl-[ribosomal protein uL15] + 2-oxoglutarate + O2 = (3S)-3-hydroxy-L-histidyl-[ribosomal protein uL15] + succinate + CO2. The catalysed reaction is L-histidyl-[protein] + 2-oxoglutarate + O2 = (3S)-3-hydroxy-L-histidyl-[protein] + succinate + CO2. In terms of biological role, oxygenase that can act as both a histone lysine demethylase and a ribosomal histidine hydroxylase. Is involved in the demethylation of trimethylated 'Lys-9' on histone H3 (H3K9me3), leading to an increase in ribosomal RNA expression. Also catalyzes the hydroxylation of 60S ribosomal protein L27a on 'His-39'. May play an important role in cell growth and survival. May be involved in ribosome biogenesis, most likely during the assembly process of pre-ribosomal particles. The polypeptide is Ribosomal oxygenase 2 (RIOX2) (Bos taurus (Bovine)).